The primary structure comprises 331 residues: Trans-O-hydroxybenzylidenepyruvate hydratase-aldolase (331 aa).

Belongs to the DapA family.

The enzyme catalyses (3E)-4-(2-hydroxyphenyl)-2-oxobut-3-enoate + H2O = salicylaldehyde + pyruvate. It functions in the pathway aromatic compound metabolism; naphthalene degradation. Its function is as follows. Involved in the naphthalene upper catabolic pathway. Catalyzes the transformation of trans-O-hydroxybenzylidenepyruvate (THBPA) to salicylaldehyde and pyruvate. The reaction is reversible. Can also use substrate which carry trans-alpha,beta-unsaturated keto acid side chain and adjacent hydroxyl group such as trans-4-(3-hydroxy-2-thianaphthenyl)-2-oxo-but-3-enoate, trans-4-(3-hydroxy-2-benzofuranyl)-2-oxobut-3-enoate, and trans-4-(3-hydroxy-2-thienyl)-2-oxobut-3-enoate. This Pseudomonas putida (Arthrobacter siderocapsulatus) protein is Trans-O-hydroxybenzylidenepyruvate hydratase-aldolase (nahE).